Here is a 135-residue protein sequence, read N- to C-terminus: QECKCHGVSGSCTTKTCWNTLPKFREIGFVLKEKYNDAVHVEVVRANRLRQPTFLKIKKVRSYQKPMETDLVYIERSPNYCEEDSTTGSVGTQGRLCNRTSPHTDGCDLMCCGRGYNTHQYTKVWQCNCKFHWCC.

Cystine bridges form between cysteine 3–cysteine 17 and cysteine 5–cysteine 12. Serine 9 is lipidated: O-palmitoleoyl serine; by PORCN. Residues 41-69 form a disordered linker region; that stretch reads VEVVRANRLRQPTFLKIKKVRSYQKPMET. 3 cysteine pairs are disulfide-bonded: cysteine 81–cysteine 112, cysteine 97–cysteine 107, and cysteine 134–cysteine 135. Asparagine 98 carries N-linked (GlcNAc...) asparagine glycosylation.

This sequence belongs to the Wnt family. Palmitoleoylation is required for efficient binding to frizzled receptors. Depalmitoleoylation leads to Wnt signaling pathway inhibition. As to expression, in adults, in brain and lung.

It localises to the secreted. It is found in the extracellular space. The protein resides in the extracellular matrix. In terms of biological role, ligand for members of the frizzled family of seven transmembrane receptors that functions in the canonical Wnt/beta-catenin signaling pathway. Required for normal fusion of the chorion and the allantois during placenta development. Required for central nervous system (CNS) angiogenesis and blood-brain barrier regulation. The protein is Protein Wnt-7b (wnt7b) of Xenopus laevis (African clawed frog).